Reading from the N-terminus, the 411-residue chain is Probable glutamate dehydrogenase 3 (411 aa).

The active site involves Lys-102.

The protein belongs to the Glu/Leu/Phe/Val dehydrogenases family.

It catalyses the reaction L-glutamate + NAD(+) + H2O = 2-oxoglutarate + NH4(+) + NADH + H(+). The catalysed reaction is L-glutamate + NADP(+) + H2O = 2-oxoglutarate + NH4(+) + NADPH + H(+). This is Probable glutamate dehydrogenase 3 (GSH3) from Arabidopsis thaliana (Mouse-ear cress).